The following is a 773-amino-acid chain: Subtilisin-like protease SBT3.4 (773 aa).

The N-terminal stretch at 1–23 (MRNFRSSVLVVLSLIIVLNVARA) is a signal peptide. A propeptide spans 24–108 (SAKSKVHIVY…VIPDSYYELA (85 aa)) (activation peptide). In terms of domain architecture, Inhibitor I9 spans 29 to 108 (VHIVYLGEKQ…VIPDSYYELA (80 aa)). The Peptidase S8 domain maps to 112–620 (IWDYLGPSAD…GGLVNPEKAA (509 aa)). Asp-142 serves as the catalytic Charge relay system. The N-linked (GlcNAc...) asparagine glycan is linked to Asn-200. His-216 acts as the Charge relay system in catalysis. N-linked (GlcNAc...) asparagine glycans are attached at residues Asn-231, Asn-408, and Asn-536. The region spanning 382–474 (SLVYPEDPGN…IDNELGTDIL (93 aa)) is the PA domain. The active-site Charge relay system is Ser-551. Residue Asn-643 is glycosylated (N-linked (GlcNAc...) asparagine).

It belongs to the peptidase S8 family.

Its subcellular location is the secreted. This chain is Subtilisin-like protease SBT3.4, found in Arabidopsis thaliana (Mouse-ear cress).